A 325-amino-acid polypeptide reads, in one-letter code: Anthranilate phosphoribosyltransferase (325 aa).

Residues Gly74, 77–78 (GD), Thr82, 84–87 (NVST), 101–109 (KHGNVSITS), and Ser113 each bind 5-phospho-alpha-D-ribose 1-diphosphate. Gly74 serves as a coordination point for anthranilate. Mg(2+) is bound at residue Ser86. Asn104 provides a ligand contact to anthranilate. An anthranilate-binding site is contributed by Arg159. Mg(2+) contacts are provided by Asp217 and Glu218.

Belongs to the anthranilate phosphoribosyltransferase family. In terms of assembly, homodimer. It depends on Mg(2+) as a cofactor.

The enzyme catalyses N-(5-phospho-beta-D-ribosyl)anthranilate + diphosphate = 5-phospho-alpha-D-ribose 1-diphosphate + anthranilate. It functions in the pathway amino-acid biosynthesis; L-tryptophan biosynthesis; L-tryptophan from chorismate: step 2/5. Functionally, catalyzes the transfer of the phosphoribosyl group of 5-phosphorylribose-1-pyrophosphate (PRPP) to anthranilate to yield N-(5'-phosphoribosyl)-anthranilate (PRA). The polypeptide is Anthranilate phosphoribosyltransferase (Thermococcus kodakarensis (strain ATCC BAA-918 / JCM 12380 / KOD1) (Pyrococcus kodakaraensis (strain KOD1))).